A 503-amino-acid polypeptide reads, in one-letter code: uncharacterized protein (503 aa).

This sequence belongs to the Mg-chelatase subunits D/I family. ComM subfamily.

This is an uncharacterized protein from Mycobacterium tuberculosis (strain CDC 1551 / Oshkosh).